The following is a 1113-amino-acid chain: Lon protease homolog, mitochondrial (1113 aa).

A mitochondrion-targeting transit peptide spans 1–61 (MLRGQTLPWR…RAFSSSSIRR (61 aa)). A disordered region spans residues 42–196 (SRLHRSLPTS…SGEKALQKPS (155 aa)). 3 stretches are compositionally biased toward basic and acidic residues: residues 64 to 99 (KPPP…RKAA), 124 to 143 (KAGA…KDGN), and 178 to 192 (DGGK…EKAL). The Lon N-terminal domain occupies 204–456 (VMAIPIAKRP…KALVVLKKEL (253 aa)). Residue 609–616 (GPPGVGKT) coordinates ATP. Basic and acidic residues predominate over residues 828 to 858 (LTDEGKAVQEESQKETESPDSKSPVDPEKST). The segment at 828–864 (LTDEGKAVQEESQKETESPDSKSPVDPEKSTTETPRV) is disordered. A Lon proteolytic domain is found at 898-1084 (TFPPGVTMGL…SEVFDLLFTD (187 aa)). Residues Ser990 and Lys1033 contribute to the active site.

This sequence belongs to the peptidase S16 family. Homohexamer or homoheptamer. Organized in a ring with a central cavity.

It is found in the mitochondrion matrix. It carries out the reaction Hydrolysis of proteins in presence of ATP.. Functionally, ATP-dependent serine protease that mediates the selective degradation of misfolded, unassembled or oxidatively damaged polypeptides as well as certain short-lived regulatory proteins in the mitochondrial matrix. May also have a chaperone function in the assembly of inner membrane protein complexes. Participates in the regulation of mitochondrial gene expression and in the maintenance of the integrity of the mitochondrial genome. Binds to mitochondrial DNA in a site-specific manner. The sequence is that of Lon protease homolog, mitochondrial (pim1) from Aspergillus niger (strain ATCC MYA-4892 / CBS 513.88 / FGSC A1513).